The following is a 391-amino-acid chain: MSRVGVVLLNLGGPERIQDVGPFLYNLFADPEIIRLPSPALQKPLAWLISTLRSGKSQEAYRSIGGGSPLRRITEQQARELQSLLRQRGLDATTYVAMRYWHPFTESAVADMKADGMDEVVVLPLYPHFSISTSGSSFRELQRLRQGDAAFEQLPIRCIRSWFDHPGYIKAMAELIAEEVRNSDDPEKAHVFFSAHGVPKSYVEEAGDPYQQQIEACTDLIMKSLAEHMGHSNPHTLAYQSRVGPVEWLKPYTEEALEQLGEAKTNDLVVVPISFVSEHIETLEEIDIEYRELATEAGVVNFRRVRALDTYPPFIEGLADLVTTSLEGPEVSLDAAAELPTKVKLYPQEKWEWGWNNSSEVWNGRLAMLGFSAFLLELISGHGPLHALGLL.

2 residues coordinate Fe cation: H196 and E281.

It belongs to the ferrochelatase family.

It localises to the cytoplasm. The catalysed reaction is heme b + 2 H(+) = protoporphyrin IX + Fe(2+). It participates in porphyrin-containing compound metabolism; protoheme biosynthesis; protoheme from protoporphyrin-IX: step 1/1. Catalyzes the ferrous insertion into protoporphyrin IX. This is Ferrochelatase from Parasynechococcus marenigrum (strain WH8102).